The following is a 201-amino-acid chain: Ephrin-A4 (201 aa).

An N-terminal signal peptide occupies residues 1-25; the sequence is MRLLPLLRTVLWAAFLGSPLRGGSS. One can recognise an Ephrin RBD domain in the interval 26–155; it reads LRHVVYWNSS…RLQVSVCCKE (130 aa). Residue Asn-33 is glycosylated (N-linked (GlcNAc...) asparagine). 2 disulfide bridges follow: Cys-58–Cys-99 and Cys-86–Cys-144. A lipid anchor (GPI-anchor amidated serine) is attached at Ser-170. The propeptide at 171–201 is removed in mature form; it reads GTSGWRGGDTPSPLCLLLLLLLLILRLLRIL.

This sequence belongs to the ephrin family. As to expression, expressed in the adult spleen, lymph node, prostate, ovary, small intestine, and colon, and in fetal heart, lung, liver and kidney. Also detected in hematopoietic cell lines.

It localises to the cell membrane. Its subcellular location is the secreted. In terms of biological role, cell surface GPI-bound ligand for Eph receptors, a family of receptor tyrosine kinases which are crucial for migration, repulsion and adhesion during neuronal, vascular and epithelial development. Binds promiscuously Eph receptors residing on adjacent cells, leading to contact-dependent bidirectional signaling into neighboring cells. May play a role in the interaction between activated B-lymphocytes and dendritic cells in tonsils. The polypeptide is Ephrin-A4 (EFNA4) (Homo sapiens (Human)).